Reading from the N-terminus, the 175-residue chain is MSKLNYIKGDLFSHKSSASSILAHACNCRGSWGAGVAAIFKKQFPSTYKLYVEHCKKHASNPSGLLGSTYLIKSESSDPGNSGRENVAYVACMFTSDAFGRRKNSADDIVENTDKSMLHLESQLAELAKTEPIEQQDGVNVVNMPKINAGLFNVPWEETEAVLKKHQVLINVYVI.

The Macro domain occupies 1 to 175; sequence MSKLNYIKGD…HQVLINVYVI (175 aa). Substrate-binding positions include 9 to 11, 25 to 27, 32 to 37, and 147 to 153; these read GDL, ACN, WGAGVA, and INAGLFN.

Belongs to the POA1 family.

It carries out the reaction ADP-alpha-D-ribose 1''-phosphate + H2O = ADP-D-ribose + phosphate. Highly specific phosphatase involved in the metabolism of ADP-ribose 1''-phosphate (Appr1p) which is produced as a consequence of tRNA splicing. In Meyerozyma guilliermondii (strain ATCC 6260 / CBS 566 / DSM 6381 / JCM 1539 / NBRC 10279 / NRRL Y-324) (Yeast), this protein is ADP-ribose 1''-phosphate phosphatase (POA1).